A 339-amino-acid chain; its full sequence is Undifferentiated embryonic cell transcription factor 1 (339 aa).

2 disordered regions span residues 1-62 (MLLR…QRTP) and 144-270 (MGLL…QVAP). Phosphoserine is present on residues Ser15, Ser18, Ser48, and Ser54. Positions 154–170 (RVRRRSTGPGRPQRRGR) are enriched in basic residues. Composition is skewed to low complexity over residues 171 to 193 (SSLSALAPAPAPVEQEAELPLAA) and 218 to 229 (TSSPPLTSTDTL). The segment covering 261 to 270 (GRASSPQVAP) has biased composition (polar residues). Positions 279-310 (QTLTHLGDISTVLGPLRDQLSTLNQHVEHLRG) are leucine-zipper.

Binds to the N-terminal region of ATF2. Associates with the TFIID complex through interaction with TBP. In terms of processing, phosphorylated. As to expression, expressed mainly in pluripotent cells with expression rapidly down-regulated upon cell differentiation.

The protein resides in the nucleus. Acts as a transcriptional coactivator of ATF2. In Mus musculus (Mouse), this protein is Undifferentiated embryonic cell transcription factor 1.